Here is a 220-residue protein sequence, read N- to C-terminus: Pyrrolidone-carboxylate peptidase (220 aa).

Residues Glu80, Cys143, and His167 contribute to the active site.

It belongs to the peptidase C15 family. In terms of assembly, homotetramer.

The protein localises to the cytoplasm. It catalyses the reaction Release of an N-terminal pyroglutamyl group from a polypeptide, the second amino acid generally not being Pro.. Its function is as follows. Removes 5-oxoproline from various penultimate amino acid residues except L-proline. The chain is Pyrrolidone-carboxylate peptidase (pcp) from Thermococcus litoralis (strain ATCC 51850 / DSM 5473 / JCM 8560 / NS-C).